A 205-amino-acid chain; its full sequence is tRNA (pseudouridine(54)-N(1))-methyltransferase (205 aa).

Residues Leu-136, Gly-156, 179 to 184 (LSPLEL), and Cys-189 each bind S-adenosyl-L-methionine.

It belongs to the methyltransferase superfamily. TrmY family. In terms of assembly, homodimer.

It localises to the cytoplasm. The enzyme catalyses pseudouridine(54) in tRNA + S-adenosyl-L-methionine = N(1)-methylpseudouridine(54) in tRNA + S-adenosyl-L-homocysteine + H(+). In terms of biological role, specifically catalyzes the N1-methylation of pseudouridine at position 54 (Psi54) in tRNAs. The chain is tRNA (pseudouridine(54)-N(1))-methyltransferase from Methanocaldococcus jannaschii (strain ATCC 43067 / DSM 2661 / JAL-1 / JCM 10045 / NBRC 100440) (Methanococcus jannaschii).